The primary structure comprises 161 residues: SsrA-binding protein (161 aa).

A disordered region spans residues methionine 1–serine 23.

It belongs to the SmpB family.

It localises to the cytoplasm. Required for rescue of stalled ribosomes mediated by trans-translation. Binds to transfer-messenger RNA (tmRNA), required for stable association of tmRNA with ribosomes. tmRNA and SmpB together mimic tRNA shape, replacing the anticodon stem-loop with SmpB. tmRNA is encoded by the ssrA gene; the 2 termini fold to resemble tRNA(Ala) and it encodes a 'tag peptide', a short internal open reading frame. During trans-translation Ala-aminoacylated tmRNA acts like a tRNA, entering the A-site of stalled ribosomes, displacing the stalled mRNA. The ribosome then switches to translate the ORF on the tmRNA; the nascent peptide is terminated with the 'tag peptide' encoded by the tmRNA and targeted for degradation. The ribosome is freed to recommence translation, which seems to be the essential function of trans-translation. The chain is SsrA-binding protein from Hyphomonas neptunium (strain ATCC 15444).